The primary structure comprises 190 residues: MPFLQISLLSIGVAADAFACSVVRGTAIQVNLFKRALVLAGIFGVFQAAMPLIGWFIGRFFAGITFIAEIDHWIAFALLGIVGTKMIWDAFQPEDDETIVDDGRVQFRPAIILGLATSIDALAVGMGLAFVEVSILKVALSMGSITFALSLAGAWIGHHGGGKFGKWATILGGIILIGIGANIVYEHLSA.

The next 6 membrane-spanning stretches (helical) occupy residues 3–23 (FLQISLLSIGVAADAFACSVV), 37–57 (LVLAGIFGVFQAAMPLIGWFI), 72–88 (HWIAFALLGIVGTKMIW), 111–131 (IILGLATSIDALAVGMGLAFV), 138–158 (VALSMGSITFALSLAGAWIGH), and 164–184 (FGKWATILGGIILIGIGANIV).

Belongs to the MntP (TC 9.B.29) family.

The protein resides in the cell membrane. Functionally, probably functions as a manganese efflux pump. This is Putative manganese efflux pump MntP from Corynebacterium glutamicum (strain ATCC 13032 / DSM 20300 / JCM 1318 / BCRC 11384 / CCUG 27702 / LMG 3730 / NBRC 12168 / NCIMB 10025 / NRRL B-2784 / 534).